The sequence spans 1392 residues: DNA-directed RNA polymerase subunit beta'' (1392 aa).

Zn(2+)-binding residues include Cys-224, Cys-295, Cys-302, and Cys-305.

It belongs to the RNA polymerase beta' chain family. RpoC2 subfamily. As to quaternary structure, in plastids the minimal PEP RNA polymerase catalytic core is composed of four subunits: alpha, beta, beta', and beta''. When a (nuclear-encoded) sigma factor is associated with the core the holoenzyme is formed, which can initiate transcription. Requires Zn(2+) as cofactor.

The protein localises to the plastid. Its subcellular location is the chloroplast. It carries out the reaction RNA(n) + a ribonucleoside 5'-triphosphate = RNA(n+1) + diphosphate. In terms of biological role, DNA-dependent RNA polymerase catalyzes the transcription of DNA into RNA using the four ribonucleoside triphosphates as substrates. This chain is DNA-directed RNA polymerase subunit beta'', found in Solanum tuberosum (Potato).